Here is a 308-residue protein sequence, read N- to C-terminus: Lipoyl synthase (308 aa).

7 residues coordinate [4Fe-4S] cluster: cysteine 48, cysteine 53, cysteine 59, cysteine 74, cysteine 78, cysteine 81, and serine 287. The 218-residue stretch at 60–277 folds into the Radical SAM core domain; sequence WSRHTATYLA…RSVGEALGLF (218 aa).

Belongs to the radical SAM superfamily. Lipoyl synthase family. Requires [4Fe-4S] cluster as cofactor.

Its subcellular location is the cytoplasm. The enzyme catalyses [[Fe-S] cluster scaffold protein carrying a second [4Fe-4S](2+) cluster] + N(6)-octanoyl-L-lysyl-[protein] + 2 oxidized [2Fe-2S]-[ferredoxin] + 2 S-adenosyl-L-methionine + 4 H(+) = [[Fe-S] cluster scaffold protein] + N(6)-[(R)-dihydrolipoyl]-L-lysyl-[protein] + 4 Fe(3+) + 2 hydrogen sulfide + 2 5'-deoxyadenosine + 2 L-methionine + 2 reduced [2Fe-2S]-[ferredoxin]. It participates in protein modification; protein lipoylation via endogenous pathway; protein N(6)-(lipoyl)lysine from octanoyl-[acyl-carrier-protein]: step 2/2. Catalyzes the radical-mediated insertion of two sulfur atoms into the C-6 and C-8 positions of the octanoyl moiety bound to the lipoyl domains of lipoate-dependent enzymes, thereby converting the octanoylated domains into lipoylated derivatives. The sequence is that of Lipoyl synthase from Chlamydia muridarum (strain MoPn / Nigg).